The following is a 400-amino-acid chain: Nucleoside permease NupC (400 aa).

The Cytoplasmic segment spans residues 1–3; the sequence is MDR. The chain crosses the membrane as a helical span at residues 4 to 24; that stretch reads VLHFVLALAVVAILALLVSSD. At 25 to 36 the chain is on the periplasmic side; that stretch reads RKKIRIRYVIQL. Residues 37–57 form a helical membrane-spanning segment; it reads LVIEVLLAWFFLNSDVGLGFV. At 58–86 the chain is on the cytoplasmic side; sequence KGFSEMFEKLLGFANEGTNFVFGSMNDQG. A helical transmembrane segment spans residues 87-107; sequence LAFFFLKVLCPIVFISALIGI. Residues 108–168 are Periplasmic-facing; the sequence is LQHIRVLPVI…GKISRNRMYT (61 aa). A helical transmembrane segment spans residues 169–189; it reads MAATAMSTVSMSIVGAYMTML. The Cytoplasmic portion of the chain corresponds to 190–192; it reads EPK. The chain crosses the membrane as a helical span at residues 193–213; it reads YVVAALVLNMFSTFIVLSLIN. The Periplasmic portion of the chain corresponds to 214–250; it reads PYRVDASEENIQMSNLHEGQSFFEMLGEYILAGFKVA. Residues 251-271 form a helical membrane-spanning segment; sequence IIVAAMLIGFIALIAALNALF. The Cytoplasmic segment spans residues 272 to 281; it reads ATVTGWFGYS. A helical membrane pass occupies residues 282–302; sequence ISFQGILGYIFYPIAWVMGVP. Residues 303-341 are Periplasmic-facing; the sequence is SSEALQVGSIMATKLVSNEFVAMMDLQKIASTLSPRAEG. Residues 342-362 traverse the membrane as a helical segment; it reads IISVFLVSFANFSSIGIIAGA. At 363–378 the chain is on the cytoplasmic side; the sequence is VKGLNEEQGNVVSRFG. A helical transmembrane segment spans residues 379 to 399; it reads LKLVYGSTLVSVLSASIAALV. Residue leucine 400 is a topological domain, periplasmic.

Belongs to the concentrative nucleoside transporter (CNT) (TC 2.A.41) family.

The protein resides in the cell inner membrane. The enzyme catalyses adenosine(in) + H(+)(in) = adenosine(out) + H(+)(out). It catalyses the reaction uridine(in) + H(+)(in) = uridine(out) + H(+)(out). It carries out the reaction thymidine(in) + H(+)(in) = thymidine(out) + H(+)(out). The catalysed reaction is cytidine(in) + H(+)(in) = cytidine(out) + H(+)(out). The enzyme catalyses 2'-deoxycytidine(in) + H(+)(in) = 2'-deoxycytidine(out) + H(+)(out). Transport is inhibited by the proton uncoupler dinitrophenol. Inhibited by the nucleoside antibiotic showdomycin. Functionally, nucleoside transport protein that can transport adenosine, uridine, thymidine, cytidine and deoxycytidine. Shows weak activity with inosine and xanthosine. Transport is driven by a proton motive force. Does not transport guanosine, deoxyguanosine, hypoxanthine or uracil. Also shows activity with the chemotherapeutic drugs 3'-azido-3'-deoxythymidine (AZT), 2',3'- dideoxycytidine (ddC) and 2'-deoxy-2',2'-difluorocytidine (gemcitabine). In Escherichia coli (strain K12), this protein is Nucleoside permease NupC.